Consider the following 213-residue polypeptide: Kynurenine formamidase (213 aa).

W18 contacts substrate. Positions 48, 52, and 54 each coordinate Zn(2+). Residue H58 is the Proton donor/acceptor of the active site. H160 and E172 together coordinate Zn(2+).

It belongs to the Cyclase 1 superfamily. KynB family. Homodimer. It depends on Zn(2+) as a cofactor.

It catalyses the reaction N-formyl-L-kynurenine + H2O = L-kynurenine + formate + H(+). Its pathway is amino-acid degradation; L-tryptophan degradation via kynurenine pathway; L-kynurenine from L-tryptophan: step 2/2. Functionally, catalyzes the hydrolysis of N-formyl-L-kynurenine to L-kynurenine, the second step in the kynurenine pathway of tryptophan degradation. In Burkholderia orbicola (strain MC0-3), this protein is Kynurenine formamidase.